The sequence spans 334 residues: Ribonucleoside-diphosphate reductase small chain (334 aa).

Asp-77, Glu-108, and His-111 together coordinate Fe cation. Tyr-115 is a catalytic residue. The Fe cation site is built by Glu-171, Glu-205, and His-208.

The protein belongs to the ribonucleoside diphosphate reductase small chain family. In terms of assembly, heterotetramer composed of a homodimer of the large subunit (R1) and a homodimer of the small subunit (R2). Larger multisubunit protein complex are also active, composed of (R1)n(R2)n. Fe cation serves as cofactor.

The enzyme catalyses a 2'-deoxyribonucleoside 5'-diphosphate + [thioredoxin]-disulfide + H2O = a ribonucleoside 5'-diphosphate + [thioredoxin]-dithiol. Its function is as follows. Ribonucleoside-diphosphate reductase holoenzyme provides the precursors necessary for viral DNA synthesis. Allows virus growth in non-dividing cells. Catalyzes the biosynthesis of deoxyribonucleotides from the corresponding ribonucleotides. This Ornithodoros (relapsing fever ticks) protein is Ribonucleoside-diphosphate reductase small chain.